Reading from the N-terminus, the 235-residue chain is Sperm annulus positionning complex subunit Chibby3 (235 aa).

Residues 1–41 are disordered; that stretch reads MADSKMKWGQAWDSSLGTATTSSSSATGSPSPFQNIRVPDT. The span at 14–32 shows a compositional bias: low complexity; sequence SSLGTATTSSSSATGSPSP. Residues 167-181 form a leucine-zipper; mediates homodimerization region; sequence LLEENNYLKLQQELL.

This sequence belongs to the chibby family. In terms of assembly, homodimer. Interacts with CIBAR1 (via BAR-like domain); both proteins form a ninefold symmetric structure at the flagellar base; are recruited to the annulus in a mutually dependent manner and regulate annulus positionning. In terms of tissue distribution, testis-specific.

Its subcellular location is the cell projection. It is found in the cilium. The protein localises to the flagellum. Its function is as follows. Plays a key role in the correct positioning of the annulus, a septin-based ring strucure in the sperm flagellum, serving both as a physical barrier and a membrane diffusion barrier that separates the midpiece (MP) from the principal piece (PP). This positioning is essential for proper sperm motility and function. Interacts with CIBAR1 to form a complex which localizes to the curved membrane region of the flagellar pocket. By doing so, may provide stability and rigidity to the periannular membrane to prevent membrane deformation. This function is crucial for halting annulus migration at the proximal end of the fibrous sheath-containing PP. The protein is Sperm annulus positionning complex subunit Chibby3 (Cby3) of Mus musculus (Mouse).